We begin with the raw amino-acid sequence, 420 residues long: MEKFFIVGSHGLKGEIKVSGAKNSALPIIAATLLTREPCVLENIPKLEDVNIMLSILKRLGSKVEFGQLLTIQNNRINELIIPEELARKIRASNLFLGPLVARFQEGVVPLPGGCNIGNRPMDLHLKGLRLMGAEVEEKSGFIRARAKKLKGAEIHLDFPSVGATENLMMAAALAQGTTIIRNAAREPEIVDLQNFLNLMGAKVKGAGTDIIKITGVNQLKGVTHKIIPDRIEAGTHMVMAAATQSDIIISGVIPEHLEAVMAKLKEAGALITSGGDWVRVTGKSIIKPVDIKTMPYPGFPTDMQPQILALLTLAQGTSIISEGVFDNRFKHVEELRRMGADIRLESRIAVIKGVPKLTGASVIAHDLRAAAALVIAGLAAEGMTVLEGIKNLDRGYENLDLKYQLIGAQIKRVNGEEKY.

Phosphoenolpyruvate is bound at residue 22–23 (KN). Arginine 91 provides a ligand contact to UDP-N-acetyl-alpha-D-glucosamine. Cysteine 115 serves as the catalytic Proton donor. Cysteine 115 bears the 2-(S-cysteinyl)pyruvic acid O-phosphothioketal mark. UDP-N-acetyl-alpha-D-glucosamine-binding positions include 120 to 124 (RPMDL), aspartate 303, and valine 325.

Belongs to the EPSP synthase family. MurA subfamily.

The protein resides in the cytoplasm. It carries out the reaction phosphoenolpyruvate + UDP-N-acetyl-alpha-D-glucosamine = UDP-N-acetyl-3-O-(1-carboxyvinyl)-alpha-D-glucosamine + phosphate. It functions in the pathway cell wall biogenesis; peptidoglycan biosynthesis. In terms of biological role, cell wall formation. Adds enolpyruvyl to UDP-N-acetylglucosamine. The protein is UDP-N-acetylglucosamine 1-carboxyvinyltransferase 1 of Carboxydothermus hydrogenoformans (strain ATCC BAA-161 / DSM 6008 / Z-2901).